An 84-amino-acid polypeptide reads, in one-letter code: Sulfur carrier protein TusA (84 aa).

Cysteine 19 acts as the Cysteine persulfide intermediate in catalysis.

Belongs to the sulfur carrier protein TusA family. Interacts with IscS.

It is found in the cytoplasm. Its pathway is tRNA modification. Its function is as follows. Sulfur carrier protein involved in sulfur trafficking in the cell. Part of a sulfur-relay system required for 2-thiolation during synthesis of 2-thiouridine of the modified wobble base 5-methylaminomethyl-2-thiouridine (mnm(5)s(2)U) in tRNA. Interacts with IscS and stimulates its cysteine desulfurase activity. Accepts an activated sulfur from IscS, which is then transferred to TusD, and thus determines the direction of sulfur flow from IscS to 2-thiouridine formation. Also appears to be involved in sulfur transfer for the biosynthesis of molybdopterin. The protein is Sulfur carrier protein TusA of Yersinia enterocolitica serotype O:8 / biotype 1B (strain NCTC 13174 / 8081).